We begin with the raw amino-acid sequence, 722 residues long: Polyribonucleotide nucleotidyltransferase (722 aa).

Mg(2+)-binding residues include Asp486 and Asp492. In terms of domain architecture, KH spans 553–612 (PKIVQLQIDIDKISLVIGSTGKTVKAITDEFEVKVQIEQNGKIILFGDDDFKMQKAKERI). An S1 motif domain is found at 622-717 (GEIYEGTVKK…KFGKIDLEIV (96 aa)).

It belongs to the polyribonucleotide nucleotidyltransferase family. It depends on Mg(2+) as a cofactor.

The protein localises to the cytoplasm. It catalyses the reaction RNA(n+1) + phosphate = RNA(n) + a ribonucleoside 5'-diphosphate. In terms of biological role, involved in mRNA degradation. Catalyzes the phosphorolysis of single-stranded polyribonucleotides processively in the 3'- to 5'-direction. The protein is Polyribonucleotide nucleotidyltransferase of Borreliella burgdorferi (strain ZS7) (Borrelia burgdorferi).